The chain runs to 843 residues: MPLSYQHFRKLLLLDEEAGPLEEELPRLADEGLNRRVAEDLNLGNLNVSIPWTHKVGNFTGLYSSTVPCFNPNWQTPSFPDIHLQEDIVDRCQQFVGPLTVNENRRLKLIMPARFYPNVTKYLPLDKGIKPYYPEHVVNHYFQTRHYLHTLWKAGILYKRESTRSASFCGSPYSWEQDLQHGRLVFQTSKRHGDKSCCPQSPGILSRSSVGPCIQSQLRQSRLGPQPAQGQLAGRQQGGSGSIRARVHPSPWGTVGVEPSGSGPTHNCASSSSSCLHQSAVRKAAYSLVSTSKGYSSSGHAVELHHFPPNSSRSQSQGPVLSCWWLQFRNSEPCSEYCLCHIVNLIEDWGPCTEHGEHLIRTPRTPARVTGGVFLVDKNPHNTTESRLVVDFSQFSRANTRVSWPKFAVPNLQSLTNLLSSNLSWLSLDVSAAFYHLPLHPAAMPHLLVGSSGLSRYVARLSSNSRIINNQHRTMQNLHNSCSRNLYVSLMLLYKTYGRKLHLYSHPIILGFRKIPMGVGLSPFLLAQFTSAICSVVRRAFPHCLAFSYMDDVVLGAKSVQHLESLYAAVTHFLLSLGIHLNPHKTKRWGYSLNFMGYVIGSWGTLPQEHIVQKIKMCFRKLPVNRPIDWKVCQRIVGLLGFAAPFTQCGYPALMPLYACIQAKQAFTFSPTYKAFLRNQYLNLYPVARQRPGLCQVFADATPTGWGLAIGHQRMRGTFVSPLPIHTAELLAACFARSRSGAKLIGTDNSVVLSRKYTSFPWLLGCAANWILRGTSFVYVPSALNPADDPSRGRLGLYRPLLRLLYRPTTGRTSLYADSPSVPSHLPDRVHFASPLHVAWRPP.

The interval 1–177 is terminal protein domain (TP); that stretch reads MPLSYQHFRK…FCGSPYSWEQ (177 aa). Residues 178-346 are spacer; that stretch reads DLQHGRLVFQ…YCLCHIVNLI (169 aa). A disordered region spans residues 220 to 265; the sequence is QSRLGPQPAQGQLAGRQQGGSGSIRARVHPSPWGTVGVEPSGSGPT. The segment covering 223 to 235 has biased composition (low complexity); that stretch reads LGPQPAQGQLAGR. The segment at 347–690 is polymerase/reverse transcriptase domain (RT); it reads EDWGPCTEHG…YLNLYPVARQ (344 aa). The region spanning 357-600 is the Reverse transcriptase domain; the sequence is EHLIRTPRTP…YSLNFMGYVI (244 aa). Positions 429, 551, and 552 each coordinate Mg(2+).

This sequence belongs to the hepadnaviridae P protein family.

The enzyme catalyses DNA(n) + a 2'-deoxyribonucleoside 5'-triphosphate = DNA(n+1) + diphosphate. It catalyses the reaction Endonucleolytic cleavage to 5'-phosphomonoester.. With respect to regulation, activated by host HSP70 and HSP40 in vitro to be able to bind the epsilon loop of the pgRNA. Because deletion of the RNase H region renders the protein partly chaperone-independent, the chaperones may be needed indirectly to relieve occlusion of the RNA-binding site by this domain. Inhibited by several reverse-transcriptase inhibitors: Lamivudine, Adefovir and Entecavir. Multifunctional enzyme that converts the viral RNA genome into dsDNA in viral cytoplasmic capsids. This enzyme displays a DNA polymerase activity that can copy either DNA or RNA templates, and a ribonuclease H (RNase H) activity that cleaves the RNA strand of RNA-DNA heteroduplexes in a partially processive 3'- to 5'-endonucleasic mode. Neo-synthesized pregenomic RNA (pgRNA) are encapsidated together with the P protein, and reverse-transcribed inside the nucleocapsid. Initiation of reverse-transcription occurs first by binding the epsilon loop on the pgRNA genome, and is initiated by protein priming, thereby the 5'-end of (-)DNA is covalently linked to P protein. Partial (+)DNA is synthesized from the (-)DNA template and generates the relaxed circular DNA (RC-DNA) genome. After budding and infection, the RC-DNA migrates in the nucleus, and is converted into a plasmid-like covalently closed circular DNA (cccDNA). The activity of P protein does not seem to be necessary for cccDNA generation, and is presumably released from (+)DNA by host nuclear DNA repair machinery. The protein is Protein P of Hepatitis B virus genotype B2 (isolate Vietnam/9873/1997) (HBV-B).